A 969-amino-acid polypeptide reads, in one-letter code: RNA polymerase-associated protein RapA (969 aa).

A Helicase ATP-binding domain is found at 164–334; sequence EVGRRYAPRV…FARLRLLDPD (171 aa). 177 to 184 serves as a coordination point for ATP; it reads DEVGLGKT. The short motif at 280-283 is the DEAH box element; that stretch reads DEAH. The Helicase C-terminal domain maps to 492-672; the sequence is RVNWLLELLK…GLEPLIEESA (181 aa).

Belongs to the SNF2/RAD54 helicase family. RapA subfamily. As to quaternary structure, interacts with the RNAP. Has a higher affinity for the core RNAP than for the holoenzyme. Its ATPase activity is stimulated by binding to RNAP.

Its function is as follows. Transcription regulator that activates transcription by stimulating RNA polymerase (RNAP) recycling in case of stress conditions such as supercoiled DNA or high salt concentrations. Probably acts by releasing the RNAP, when it is trapped or immobilized on tightly supercoiled DNA. Does not activate transcription on linear DNA. Probably not involved in DNA repair. This Aliivibrio salmonicida (strain LFI1238) (Vibrio salmonicida (strain LFI1238)) protein is RNA polymerase-associated protein RapA.